Reading from the N-terminus, the 318-residue chain is ATP synthase gamma chain (318 aa).

This sequence belongs to the ATPase gamma chain family. As to quaternary structure, F-type ATPases have 2 components, CF(1) - the catalytic core - and CF(0) - the membrane proton channel. CF(1) has five subunits: alpha(3), beta(3), gamma(1), delta(1), epsilon(1). CF(0) has three main subunits: a, b and c.

It localises to the cell membrane. Functionally, produces ATP from ADP in the presence of a proton gradient across the membrane. The gamma chain is believed to be important in regulating ATPase activity and the flow of protons through the CF(0) complex. The protein is ATP synthase gamma chain of Lactobacillus gasseri (strain ATCC 33323 / DSM 20243 / BCRC 14619 / CIP 102991 / JCM 1131 / KCTC 3163 / NCIMB 11718 / NCTC 13722 / AM63).